The chain runs to 291 residues: ATP synthase subunit a (291 aa).

7 helical membrane passes run 50–70 (LDSMGWSIGLGVIFCLLFWIV), 108–128 (IAPLALTIFVWIFLMNLMDLI), 129–149 (PVDWIPQVAAFVGANVFGMDP), 161–181 (DPNITLGMSLSVFVLILFYSI), 203–223 (PVAKALLIPVNLILELVTFLA), 241–261 (LIFILIALLPFWIQWALSVPW), and 262–282 (AIFHILVITLQAFIFMMLTIV).

The protein belongs to the ATPase A chain family. F-type ATPases have 2 components, CF(1) - the catalytic core - and CF(0) - the membrane proton channel. CF(1) has five subunits: alpha(3), beta(3), gamma(1), delta(1), epsilon(1). CF(0) has three main subunits: a(1), b(2) and c(9-12). The alpha and beta chains form an alternating ring which encloses part of the gamma chain. CF(1) is attached to CF(0) by a central stalk formed by the gamma and epsilon chains, while a peripheral stalk is formed by the delta and b chains.

The protein localises to the cell inner membrane. Its function is as follows. Key component of the proton channel; it plays a direct role in the translocation of protons across the membrane. This Acinetobacter baumannii (strain AB307-0294) protein is ATP synthase subunit a.